The chain runs to 907 residues: DNA ligase 4 (907 aa).

Positions 273, 275, 280, 333, 378, 438, 443, 460, and 462 each coordinate ATP. Lys-275 (N6-AMP-lysine intermediate) is an active-site residue. Glu-333 contacts Mg(2+). Residue Glu-438 coordinates Mg(2+). 2 BRCT domains span residues 655-754 (PVSN…ESDI) and 800-906 (VPLF…HYQC).

It belongs to the ATP-dependent DNA ligase family. Mg(2+) serves as cofactor.

It localises to the nucleus. The enzyme catalyses ATP + (deoxyribonucleotide)n-3'-hydroxyl + 5'-phospho-(deoxyribonucleotide)m = (deoxyribonucleotide)n+m + AMP + diphosphate.. Its function is as follows. DNA ligase involved in DNA non-homologous end joining (NHEJ); required for double-strand break (DSB) repair. The chain is DNA ligase 4 (LIG4) from Kluyveromyces lactis (strain ATCC 8585 / CBS 2359 / DSM 70799 / NBRC 1267 / NRRL Y-1140 / WM37) (Yeast).